Reading from the N-terminus, the 108-residue chain is Nucleoid-associated protein PSPTO_3645 (108 aa).

Residues 85–96 (QASQDKTASMTA) are compositionally biased toward polar residues. A disordered region spans residues 85 to 108 (QASQDKTASMTAGMQLPPGMKLPF).

This sequence belongs to the YbaB/EbfC family. In terms of assembly, homodimer.

Its subcellular location is the cytoplasm. The protein resides in the nucleoid. Functionally, binds to DNA and alters its conformation. May be involved in regulation of gene expression, nucleoid organization and DNA protection. This chain is Nucleoid-associated protein PSPTO_3645, found in Pseudomonas syringae pv. tomato (strain ATCC BAA-871 / DC3000).